We begin with the raw amino-acid sequence, 506 residues long: 5'-3' exonuclease PLD4 (506 aa).

A helical transmembrane segment spans residues 31 to 51 (LQVLGALAVLWLGSVALICLL). A disulfide bridge connects residues Cys94 and Cys250. N-linked (GlcNAc...) asparagine glycosylation is found at Asn150 and Asn171. Positions 209-236 (TRGVLHSKFWVVDGRHIYMGSANMDWRS) constitute a PLD phosphodiesterase 1 domain. His214 (proton donor) is an active-site residue. Residues Lys216 and Asp221 contribute to the active site. Asn249, Asn281, Asn403, Asn417, and Asn427 each carry an N-linked (GlcNAc...) asparagine glycan. The cysteines at positions 379 and 502 are disulfide-linked. One can recognise a PLD phosphodiesterase 2 domain in the interval 423–449 (FSRVNHSKFMVTEKAAYIGTSNWSEDY). The active-site Nucleophile is His428. N-linked (GlcNAc...) asparagine glycosylation occurs at Asn444.

This sequence belongs to the phospholipase D family. In terms of assembly, homodimer. In terms of processing, highly N-glycosylated. As to expression, expressed in plasmacytoid dendritic cells and monocytes (at protein level).

It localises to the endoplasmic reticulum membrane. The protein resides in the golgi apparatus. Its subcellular location is the trans-Golgi network membrane. It is found in the nucleus. The protein localises to the early endosome. It localises to the cytoplasmic vesicle. The protein resides in the phagosome. Its subcellular location is the lysosome. The catalysed reaction is Exonucleolytic cleavage in the 5'- to 3'-direction to yield nucleoside 3'-phosphates.. The enzyme catalyses a 5'-end 5'-dephospho-ribonucleotidyl-ribonucleotide-RNA + H2O = a ribonucleoside 3'-phosphate + a 5'-end dephospho-ribonucleoside-RNA + H(+). It carries out the reaction a ribonucleoside 3'-phosphate-2'-3'-cyclophospho-GMP + H2O = a ribonucleoside 3'-phosphate + 2',3'-cyclophospho-GMP + H(+). It catalyses the reaction a 5'-end 5'-dephospho-2'-deoxyribonucleotidyl-2'-deoxyribonucleotide in single-stranded DNA + H2O = a 5'-end dephospho-2'-deoxyribonucleoside in single-stranded DNA + a 2'-deoxyribonucleoside 3'-phosphate + H(+). The catalysed reaction is a 5'-end 5'-phospho-2'-deoxyribonucleotide in single-stranded DNA + H2O = a 5'-end 5'-dephospho-2'-deoxyribonucleotide in single-stranded DNA + phosphate. The enzyme catalyses a 3-lyso-sn-glycero-1-phospho-(3'-acyl-1'-sn-glycerol) + a 1-acyl-sn-glycerol = a 3-acyl-sn-glycero-1-phospho-(3'-acyl-1'-sn-glycerol) + glycerol. It carries out the reaction 3-lyso-sn-glycero-1-phospho-(3'-(9Z-octadecenoyl)-1'-sn-glycerol) + 1-(9Z-octadecenoyl)-sn-glycerol = 3-(9Z-octadecenoyl)-sn-glycero-1-phospho-(3'-(9Z-octadecenoyl)-1'-sn-glycerol) + glycerol. With respect to regulation, the exonuclease activity toward ssDNA substrate is Ca(2+) and Mg(2+)-independent, but it is inhibited by Fe(2+), Cu(2+) and to a lesser extent Zn(2+) ions. In terms of biological role, 5'-&gt;3' exonuclease that hydrolyzes the phosphodiester bond of single-stranded DNA (ssDNA) and RNA molecules to form nucleoside 3'-monophosphates and 5'-end 5'-hydroxy deoxyribonucleotide/ribonucleotide fragments. Partially redundant with PLD3, can cleave all four nucleotides displaying higher efficiency for ssDNA and RNA fragments initiated with uridine and guanosine residues and lower efficiency for cytidine-initiated substrates. As a result, it does not always degrade polynucleotides to the single nucleotide level, it can stall at specific sites sparing certain fragments from exonucleolytic degradation. Processes self and pathogenic ssDNA and RNA molecules that reach the endolysosomal compartment via phagocytosis or autophagy and may serve as 'danger' signals for recognition by innate immune receptors such as toll-like receptors (TLRs). Degrades mitochondrial CpG-rich ssDNA fragments to prevent TLR9 activation and autoinflammatory response, but it can cleave viral RNA to generate ligands for TLR7 activation and initiate antiviral immune responses. In plasmacytoid dendritic cells, it cooperates with endonuclease RNASET2 to release 2',3'-cyclic guanosine monophosphate (2',3'-cGMP), a potent stimulatory ligand for TLR7. Produces 2',3'-cGMPs and cytidine-rich RNA fragments that occupy TLR7 ligand-binding pockets and trigger a signaling-competent state. Can exert polynucleotide phosphatase activity toward 5'-phosphorylated ssDNA substrates although at a slow rate. Transphosphatidylase that catalyzes the exchange with R to S stereo-inversion of the glycerol moiety between (S,R)-lysophosphatidylglycerol (LPG) and monoacylglycerol (MAG) substrates to yield (S,S)-bis(monoacylglycero)phosphate (BMP). Can synthesize a variety of (S,S)-BMPs representing the main phospholipid constituent of lysosomal intralumenal vesicle (ILV) membranes that bind acid hydrolases for lipid degradation. Regulates the homeostasis and interorganellar communication of the endolysosomal system with an overall impact on cellular removal of dysfunctional organelles via autophagy as well as proper protein and lipid turnover. May play a role in myotube formation in response to ER stress. The sequence is that of 5'-3' exonuclease PLD4 from Homo sapiens (Human).